The primary structure comprises 453 residues: Signal recognition particle protein (453 aa).

GTP contacts are provided by residues 107-114, 190-194, and 248-251; these read GLQGAGKT, DTAGR, and TKVD.

Belongs to the GTP-binding SRP family. SRP54 subfamily. In terms of assembly, part of the signal recognition particle protein translocation system, which is composed of SRP and FtsY. SRP is a ribonucleoprotein composed of Ffh and a 4.5S RNA molecule.

It is found in the cytoplasm. It carries out the reaction GTP + H2O = GDP + phosphate + H(+). In terms of biological role, involved in targeting and insertion of nascent membrane proteins into the cytoplasmic membrane. Binds to the hydrophobic signal sequence of the ribosome-nascent chain (RNC) as it emerges from the ribosomes. The SRP-RNC complex is then targeted to the cytoplasmic membrane where it interacts with the SRP receptor FtsY. Interaction with FtsY leads to the transfer of the RNC complex to the Sec translocase for insertion into the membrane, the hydrolysis of GTP by both Ffh and FtsY, and the dissociation of the SRP-FtsY complex into the individual components. This is Signal recognition particle protein from Escherichia coli O157:H7.